We begin with the raw amino-acid sequence, 342 residues long: Protein RecA 1 (342 aa).

G68–T75 provides a ligand contact to ATP.

It belongs to the RecA family.

Its subcellular location is the cytoplasm. Can catalyze the hydrolysis of ATP in the presence of single-stranded DNA, the ATP-dependent uptake of single-stranded DNA by duplex DNA, and the ATP-dependent hybridization of homologous single-stranded DNAs. It interacts with LexA causing its activation and leading to its autocatalytic cleavage. The protein is Protein RecA 1 of Myxococcus xanthus.